The primary structure comprises 294 residues: Deubiquitinase OTUD6B (294 aa).

Disordered regions lie at residues M1–L46 and A67–E120. Polar residues-rich tracts occupy residues K27–P36 and P73–T86. The span at K111–E120 shows a compositional bias: basic and acidic residues. The region spanning L150–L287 is the OTU domain. The interval I155–C161 is cys-loop. D158 is a catalytic residue. C161 acts as the Nucleophile in catalysis. Residues I222 to L232 form a variable-loop region. The interval Y270–H280 is his-loop. H280 is a catalytic residue.

The catalysed reaction is Thiol-dependent hydrolysis of ester, thioester, amide, peptide and isopeptide bonds formed by the C-terminal Gly of ubiquitin (a 76-residue protein attached to proteins as an intracellular targeting signal).. Functionally, deubiquitinating enzyme that may play a role in the ubiquitin-dependent regulation of different cellular processes. In Xenopus tropicalis (Western clawed frog), this protein is Deubiquitinase OTUD6B (otud6b).